The chain runs to 264 residues: uncharacterized protein (264 aa).

A run of 8 helical transmembrane segments spans residues 19–39 (LFPAVIFASLAITQIIPLPFL), 42–62 (YDWLLIICVLMQLWMVRSGLE), 69–89 (VITLFHLIGLALELFKVHMGS), 100–120 (IFGVPLYSGFMYASVASYLCQ), 136–156 (FAVVPLAAAIYLNFFTHHFSI), 160–180 (WWLSGLVIIVFWQTWVTYEVN), 192–212 (FILIGFFIWIAENIATFFGAW), and 223–243 (LVHLGKVSSWLLLVIVSFLIV).

It localises to the cell membrane. This is an uncharacterized protein from Bacillus subtilis (strain 168).